Reading from the N-terminus, the 247-residue chain is Segregation and condensation protein A (247 aa).

The protein belongs to the ScpA family. Component of a cohesin-like complex composed of ScpA, ScpB and the Smc homodimer, in which ScpA and ScpB bind to the head domain of Smc. The presence of the three proteins is required for the association of the complex with DNA.

The protein localises to the cytoplasm. In terms of biological role, participates in chromosomal partition during cell division. May act via the formation of a condensin-like complex containing Smc and ScpB that pull DNA away from mid-cell into both cell halves. The chain is Segregation and condensation protein A from Bacillus cereus (strain AH187).